Consider the following 666-residue polypeptide: Endogenous retrovirus group K member 9 Gag polyprotein (666 aa).

Gly-2 is lipidated: N-myristoyl glycine. A disordered region spans residues 165–264 (GKGPELVGPS…APPSRQGSEL (100 aa)). Residues 232-247 (GMPPAPQGRAPYPQPP) show a composition bias toward pro residues. 2 CCHC-type zinc fingers span residues 544–561 (GKCY…NCPV) and 580–597 (DLCP…QCRS). The tract at residues 598 to 641 (KFDKNGQPLSGNEQRGQPQAPQQTGAFPIQPFVPQGFQGQQPPL) is disordered. Residues 604–622 (QPLSGNEQRGQPQAPQQTG) show a composition bias toward polar residues. Positions 624 to 640 (FPIQPFVPQGFQGQQPP) are enriched in low complexity.

Belongs to the beta type-B retroviral Gag protein family. HERV class-II K(HML-2) gag subfamily. In terms of processing, myristoylation is essential for retroviral assembly. Alteration of the glycine residue leads to a block in the budding of particles and an accumulation of Gag inside the cell. Specific enzymatic cleavages may yield mature proteins.

Its subcellular location is the cell membrane. The products of the Gag polyproteins of infectious retroviruses perform highly complex orchestrated tasks during the assembly, budding, maturation, and infection stages of the viral replication cycle. During viral assembly, the proteins form membrane associations and self-associations that ultimately result in budding of an immature virion from the infected cell. Gag precursors also function during viral assembly to selectively bind and package two plus strands of genomic RNA. Endogenous Gag proteins may have kept, lost or modified their original function during evolution. The chain is Endogenous retrovirus group K member 9 Gag polyprotein (ERVK-9) from Homo sapiens (Human).